The primary structure comprises 355 residues: S-adenosylmethionine:tRNA ribosyltransferase-isomerase (355 aa).

The protein belongs to the QueA family. As to quaternary structure, monomer.

Its subcellular location is the cytoplasm. The catalysed reaction is 7-aminomethyl-7-carbaguanosine(34) in tRNA + S-adenosyl-L-methionine = epoxyqueuosine(34) in tRNA + adenine + L-methionine + 2 H(+). Its pathway is tRNA modification; tRNA-queuosine biosynthesis. In terms of biological role, transfers and isomerizes the ribose moiety from AdoMet to the 7-aminomethyl group of 7-deazaguanine (preQ1-tRNA) to give epoxyqueuosine (oQ-tRNA). This is S-adenosylmethionine:tRNA ribosyltransferase-isomerase from Gluconacetobacter diazotrophicus (strain ATCC 49037 / DSM 5601 / CCUG 37298 / CIP 103539 / LMG 7603 / PAl5).